The sequence spans 253 residues: 5'-nucleotidase SurE (253 aa).

A divalent metal cation is bound by residues Asp-8, Asp-9, Ser-39, and Asn-92.

The protein belongs to the SurE nucleotidase family. A divalent metal cation serves as cofactor.

It localises to the cytoplasm. The enzyme catalyses a ribonucleoside 5'-phosphate + H2O = a ribonucleoside + phosphate. Nucleotidase that shows phosphatase activity on nucleoside 5'-monophosphates. This chain is 5'-nucleotidase SurE, found in Burkholderia pseudomallei (strain 668).